A 662-amino-acid polypeptide reads, in one-letter code: Glycogen debranching enzyme (662 aa).

The active-site Nucleophile is aspartate 338. Glutamate 373 (proton donor) is an active-site residue.

It belongs to the glycosyl hydrolase 13 family.

It catalyses the reaction Hydrolysis of (1-&gt;6)-alpha-D-glucosidic linkages to branches with degrees of polymerization of three or four glucose residues in limit dextrin.. Its pathway is glycan degradation; glycogen degradation. Functionally, removes maltotriose and maltotetraose chains that are attached by 1,6-alpha-linkage to the limit dextrin main chain, generating a debranched limit dextrin. The chain is Glycogen debranching enzyme from Yersinia pseudotuberculosis serotype IB (strain PB1/+).